A 135-amino-acid polypeptide reads, in one-letter code: Large ribosomal subunit protein uL16c (135 aa).

It belongs to the universal ribosomal protein uL16 family. In terms of assembly, part of the 50S ribosomal subunit.

The protein localises to the plastid. Its subcellular location is the chloroplast. This chain is Large ribosomal subunit protein uL16c, found in Daucus carota (Wild carrot).